The sequence spans 612 residues: Actin-binding LIM protein 2 (612 aa).

LIM zinc-binding domains are found at residues 22 to 81 (ILCN…LYGT), 81 to 141 (TRCF…TLLG), 151 to 210 (RSCG…KFGI), and 210 to 270 (IRCD…ARTE). Residues C83, C86, H103, C106, C109, C112, C131, and C134 each contribute to the Zn(2+) site. Zn(2+)-binding residues include C212, C215, H232, C235, C238, C241, H260, and C263. Residues 269–278 (TEDKSKETRT) show a composition bias toward basic and acidic residues. Disordered stretches follow at residues 269–295 (TEDK…SGSP) and 341–433 (AVGD…DNIY). A compositionally biased stretch (low complexity) spans 279-295 (SSESIVSVPASSTSGSP). A phosphoserine mark is found at S282, S294, G351, R356, S365, and S368. Residues 364 to 373 (SSPSSAGSVS) show a composition bias toward low complexity. Residues 394–416 (SGRSTPSLSVHSDSRPPSSTYQQ) show a composition bias toward polar residues. A Phosphoserine modification is found at S453. The tract at residues 471-498 (ADTRTNSPDLDSQSLSLSSGTDQEPLQR) is disordered. Residue T473 is modified to Phosphothreonine. A phosphoserine mark is found at S477 and S579. The segment covering 477–489 (SPDLDSQSLSLSS) has biased composition (low complexity). In terms of domain architecture, HP spans 544–612 (TREYKIYPYD…NDLKKKALLF (69 aa)).

Interacts with F-actin and ABRA. In terms of tissue distribution, expressed in brain. Highly expressed in caudate/putamen, moderately expressed in the olfactory bulb. In the hippocampus, expressed in the CA1, CA2 and CA3 fields. In the cerebellum, expressed in Purkinje cells.

The protein resides in the cytoplasm. Its function is as follows. May act as scaffold protein. May stimulate ABRA activity and ABRA-dependent SRF transcriptional activity. This is Actin-binding LIM protein 2 (Ablim2) from Mus musculus (Mouse).